The primary structure comprises 608 residues: Probable adenylate kinase 5, chloroplastic (608 aa).

Residues 1–20 are compositionally biased toward low complexity; that stretch reads MAASSSSSSPAAASAPFAAP. The tract at residues 1-44 is disordered; that stretch reads MAASSSSSSPAAASAPFAAPGPHRRPGLALRPSPPTPPSSSLSC. The transit peptide at 1-75 directs the protein to the chloroplast; it reads MAASSSSSSP…GPRGMGLRCR (75 aa). 99-104 provides a ligand contact to ATP; the sequence is ASGKGT. Residues 119–148 form an NMP region; it reads STGDLLRAEVSSGTEIGKKAKEYMDNGMLV. Residues T120, R125, 146–148, 175–178, and Q182 contribute to the AMP site; these read MLV and GYPR. ATP-binding positions include R209, R213, and 222–223; that span reads IY. The tract at residues 212 to 245 is LID; that stretch reads GRRLDPETGKIYHIKNFPPENDEVSARLVTRSDD. The AMP site is built by R242 and R253.

It belongs to the adenylate kinase family.

The protein localises to the plastid. Its subcellular location is the chloroplast. It carries out the reaction AMP + ATP = 2 ADP. Its function is as follows. Catalyzes the reversible transfer of the terminal phosphate group between ATP and AMP. Plays an important role in cellular energy homeostasis and in adenine nucleotide metabolism. The chain is Probable adenylate kinase 5, chloroplastic from Oryza sativa subsp. japonica (Rice).